The primary structure comprises 199 residues: NADH-quinone oxidoreductase subunit B 2 (199 aa).

Residues C78, C79, C143, and C173 each coordinate [4Fe-4S] cluster.

Belongs to the complex I 20 kDa subunit family. NDH-1 is composed of 14 different subunits. Subunits NuoB, C, D, E, F, and G constitute the peripheral sector of the complex. [4Fe-4S] cluster serves as cofactor.

It localises to the cell inner membrane. The enzyme catalyses a quinone + NADH + 5 H(+)(in) = a quinol + NAD(+) + 4 H(+)(out). Its function is as follows. NDH-1 shuttles electrons from NADH, via FMN and iron-sulfur (Fe-S) centers, to quinones in the respiratory chain. The immediate electron acceptor for the enzyme in this species is believed to be ubiquinone. Couples the redox reaction to proton translocation (for every two electrons transferred, four hydrogen ions are translocated across the cytoplasmic membrane), and thus conserves the redox energy in a proton gradient. The sequence is that of NADH-quinone oxidoreductase subunit B 2 from Rhodopseudomonas palustris (strain BisB5).